A 354-amino-acid polypeptide reads, in one-letter code: Dual-specificity RNA methyltransferase RlmN (354 aa).

The active-site Proton acceptor is the glutamate 86. In terms of domain architecture, Radical SAM core spans 105–338 (RHARYTICVS…CTIRQSKGLD (234 aa)). Cysteine 112 and cysteine 343 form a disulfide bridge. Cysteine 119, cysteine 123, and cysteine 126 together coordinate [4Fe-4S] cluster. S-adenosyl-L-methionine is bound by residues 169–170 (GE), serine 201, 224–226 (SLH), and asparagine 300. The active-site S-methylcysteine intermediate is the cysteine 343.

Belongs to the radical SAM superfamily. RlmN family. [4Fe-4S] cluster serves as cofactor.

It localises to the cytoplasm. The enzyme catalyses adenosine(2503) in 23S rRNA + 2 reduced [2Fe-2S]-[ferredoxin] + 2 S-adenosyl-L-methionine = 2-methyladenosine(2503) in 23S rRNA + 5'-deoxyadenosine + L-methionine + 2 oxidized [2Fe-2S]-[ferredoxin] + S-adenosyl-L-homocysteine. The catalysed reaction is adenosine(37) in tRNA + 2 reduced [2Fe-2S]-[ferredoxin] + 2 S-adenosyl-L-methionine = 2-methyladenosine(37) in tRNA + 5'-deoxyadenosine + L-methionine + 2 oxidized [2Fe-2S]-[ferredoxin] + S-adenosyl-L-homocysteine. Specifically methylates position 2 of adenine 2503 in 23S rRNA and position 2 of adenine 37 in tRNAs. m2A2503 modification seems to play a crucial role in the proofreading step occurring at the peptidyl transferase center and thus would serve to optimize ribosomal fidelity. This is Dual-specificity RNA methyltransferase RlmN from Campylobacter fetus subsp. fetus (strain 82-40).